Here is a 154-residue protein sequence, read N- to C-terminus: Proteinase inhibitor type-2 P303.51 (154 aa).

Residues 1 to 25 form the signal peptide; that stretch reads MAVHKEVNFVAYLLIVLGLLVLVSA. Tandem repeats lie at residues 31-87 and 88-147. Intrachain disulfides connect Cys-34–Cys-122, Cys-38–Cys-118, Cys-46–Cys-128, Cys-58–Cys-95, Cys-61–Cys-79, Cys-62–Cys-91, Cys-68–Cys-104, and Cys-121–Cys-139.

This sequence belongs to the protease inhibitor I20 (potato type II proteinase inhibitor) family.

The chain is Proteinase inhibitor type-2 P303.51 from Solanum tuberosum (Potato).